A 56-amino-acid chain; its full sequence is PI-stichotoxin-Hcr2o (56 aa).

The 51-residue stretch at 4-54 folds into the BPTI/Kunitz inhibitor domain; sequence CLEPKVVGPCKARIRRFYFDSETGKCTPFIYGGCGGNGNNFETLHACRAIC. 3 disulfides stabilise this stretch: C4–C54, C13–C37, and C29–C50.

The protein belongs to the venom Kunitz-type family. Sea anemone type 2 potassium channel toxin subfamily.

Its subcellular location is the secreted. The protein localises to the nematocyst. Its function is as follows. This recombinant serine protease inhibitor inhibits both trypsin (Ki=21 nM) and chymotrypsin (Ki=500 nM). It possesses anti-inflammatory activity in vitro. It inhibits macrophage LPS-induced nitric oxide synthesis, and blocks histamine influence on intracellular calcium concentration in murine bone marrow-derived macrophages, which can indicate inhibition of H1-histamine receptor (HRH1). In vitro, it shows cytoprotective activity in the oxidative stress agent 6-hydroxydopamine (6-OHDA)-induced neurotoxicity model. In this model, it decreases reactive oxygen species (ROS) levels, and increases cell viability in a correlated manner. It is possible that the observed effect is due to the ability of this peptides to act as free-radical scavenger. In vivo, it shows analgesic activity, since it increases hot plate and tail flick withdrawal latencies, when using a mice thermal pain stimulation model. The chain is PI-stichotoxin-Hcr2o from Radianthus crispa (Leathery sea anemone).